A 534-amino-acid chain; its full sequence is CTP synthase (534 aa).

Positions 1 to 267 are amidoligase domain; sequence MTKYIFVTGG…DQIVCDHLKL (267 aa). S13 provides a ligand contact to CTP. Residue S13 participates in UTP binding. 14-19 is a binding site for ATP; it reads SIGKGI. L-glutamine is bound at residue Y54. D71 is a binding site for ATP. D71 and E141 together coordinate Mg(2+). CTP contacts are provided by residues 148 to 150, 188 to 193, and K224; these read DIE and KTKPTQ. Residues 188-193 and K224 each bind UTP; that span reads KTKPTQ. Position 240 to 242 (240 to 242) interacts with ATP; sequence RDV. The Glutamine amidotransferase type-1 domain maps to 292-534; it reads KIALVGKYVE…FVTAAIKNSN (243 aa). G354 contacts L-glutamine. The Nucleophile; for glutamine hydrolysis role is filled by C381. L-glutamine-binding positions include 382-385, E405, and R463; that span reads LGMQ. Residues H508 and E510 contribute to the active site.

The protein belongs to the CTP synthase family. In terms of assembly, homotetramer.

The enzyme catalyses UTP + L-glutamine + ATP + H2O = CTP + L-glutamate + ADP + phosphate + 2 H(+). The catalysed reaction is L-glutamine + H2O = L-glutamate + NH4(+). It catalyses the reaction UTP + NH4(+) + ATP = CTP + ADP + phosphate + 2 H(+). It participates in pyrimidine metabolism; CTP biosynthesis via de novo pathway; CTP from UDP: step 2/2. With respect to regulation, allosterically activated by GTP, when glutamine is the substrate; GTP has no effect on the reaction when ammonia is the substrate. The allosteric effector GTP functions by stabilizing the protein conformation that binds the tetrahedral intermediate(s) formed during glutamine hydrolysis. Inhibited by the product CTP, via allosteric rather than competitive inhibition. Functionally, catalyzes the ATP-dependent amination of UTP to CTP with either L-glutamine or ammonia as the source of nitrogen. Regulates intracellular CTP levels through interactions with the four ribonucleotide triphosphates. This is CTP synthase from Streptococcus pyogenes serotype M2 (strain MGAS10270).